Consider the following 1157-residue polypeptide: DNA-directed RNA polymerase subunit beta (1157 aa).

This sequence belongs to the RNA polymerase beta chain family. The RNAP catalytic core consists of 2 alpha, 1 beta, 1 beta' and 1 omega subunit. When a sigma factor is associated with the core the holoenzyme is formed, which can initiate transcription.

It carries out the reaction RNA(n) + a ribonucleoside 5'-triphosphate = RNA(n+1) + diphosphate. In terms of biological role, DNA-dependent RNA polymerase catalyzes the transcription of DNA into RNA using the four ribonucleoside triphosphates as substrates. This Tropheryma whipplei (Whipple's bacillus) protein is DNA-directed RNA polymerase subunit beta.